The sequence spans 740 residues: Putative Pol polyprotein from transposon element Bs1 (740 aa).

Residues 469–503 (TAVAHNLLVQALFMDGRASDAYVVLEEMQNNGPFP) form a PPR repeat.

Its function is as follows. Bs1 is probably an active plant retrotransposon. This chain is Putative Pol polyprotein from transposon element Bs1, found in Zea mays (Maize).